A 790-amino-acid chain; its full sequence is LPS-assembly protein LptD (790 aa).

Positions 1 to 20 (MRMLRWLILSAFSVAGAVQA) are cleaved as a signal peptide.

Belongs to the LptD family. Component of the lipopolysaccharide transport and assembly complex. Interacts with LptE and LptA.

It is found in the cell outer membrane. Its function is as follows. Together with LptE, is involved in the assembly of lipopolysaccharide (LPS) at the surface of the outer membrane. This chain is LPS-assembly protein LptD, found in Bordetella pertussis (strain Tohama I / ATCC BAA-589 / NCTC 13251).